Consider the following 115-residue polypeptide: Large ribosomal subunit protein bL20c (115 aa).

Belongs to the bacterial ribosomal protein bL20 family.

The protein resides in the plastid. It localises to the chloroplast. Functionally, binds directly to 23S ribosomal RNA and is necessary for the in vitro assembly process of the 50S ribosomal subunit. It is not involved in the protein synthesizing functions of that subunit. The protein is Large ribosomal subunit protein bL20c (rpl20) of Cyanidium caldarium (Red alga).